A 365-amino-acid chain; its full sequence is Protein SGT1 homolog (365 aa).

N-acetylalanine is present on alanine 2. TPR repeat units lie at residues 11–44, 45–78, and 79–112; these read SQRFFQSFSDALIDEDPQAALEELTKALEQKPDD, AQYYCQRAYCHILLGNYCVAVADAKKSLELNPNN, and STAMLRKGICEYHEKNYAAALETFTEGQKLDIET. Residues 169–258 form the CS domain; it reads QSKIKYDWYQ…PEAVRWEKLE (90 aa). Threonine 265 carries the phosphothreonine modification. The SGS domain occupies 276–365; that stretch reads LYPSSSPYTR…PPDDMEWKKY (90 aa). Position 281 is a phosphoserine (serine 281). At threonine 284 the chain carries Phosphothreonine. Lysine 295 participates in a covalent cross-link: Glycyl lysine isopeptide (Lys-Gly) (interchain with G-Cter in SUMO1); alternate. Lysine 295 participates in a covalent cross-link: Glycyl lysine isopeptide (Lys-Gly) (interchain with G-Cter in SUMO2); alternate. Residue serine 331 is modified to Phosphoserine.

It belongs to the SGT1 family. In terms of assembly, probably associates with SCF (SKP1-CUL1-F-box protein) complex through interaction with SKP1. Interacts with S100A6. Interacts with HSP90. Phosphorylated at Ser-281 and Ser-331, dephosphorylation promotes nuclear translocation, most likely due to disruption of the SUGT1-HSP90 complex.

It is found in the cytoplasm. Its subcellular location is the nucleus. Functionally, may play a role in ubiquitination and subsequent proteasomal degradation of target proteins. In Homo sapiens (Human), this protein is Protein SGT1 homolog.